We begin with the raw amino-acid sequence, 83 residues long: Small ribosomal subunit protein bS16 (83 aa).

This sequence belongs to the bacterial ribosomal protein bS16 family.

The protein is Small ribosomal subunit protein bS16 of Thermosynechococcus vestitus (strain NIES-2133 / IAM M-273 / BP-1).